A 552-amino-acid chain; its full sequence is MRVLPATLLVGAATAATPAQQVLGGLQDFGNAVQDAMHENLPKINKPLEAFQEQLKSLYEAREFWEEVANAFPQNLDHNPVFSLPKKHTRRPDSHWDHIVRGADVQSVWVTGENGEKEREIEGKLEAYDLRIKKTDPSSLGIDPDVKQYTGYLDDNENDKHLFYWFFESRNDPKNDPVVLWLNGGPGCSSLTGLFMELGPSSIDENIKPVYNPYAWNSNASVIFLDQPVNVGYSYSGSTVSDTVAAGKDVYALLTLFFKQFPEYAEQDFHIAGESYAGHYIPVFTSEILSHQKRNINLKSVLIGNGLTDGLTQYEYYRPMACGEGGYPAVLDESSCRSMDNALGRCQSMIESCYNSESAWVCVPASIYCNNALLAPYQRTGQNVYDVRGKCEDESNLCYKGMGYVSEYLNKPEVRAAVGAEVDGYDSCNFDINRNFLFHGDWMKPYHRLVPGILEQIPVLIYAGDADFICNWLGNKAWTEALEWPGHKEFAAAPMEDLKIVDNEHTGKKIGQIKTHGNFTFMRLYGGGHMVPMDQPEASLEFFNRWLGGEWF.

The first 17 residues, 1-17 (MRVLPATLLVGAATAAT), serve as a signal peptide directing secretion. Positions 18–133 (PAQQVLGGLQ…KLEAYDLRIK (116 aa)) are excised as a propeptide. 5 cysteine pairs are disulfide-bonded: Cys188/Cys428, Cys322/Cys336, Cys346/Cys369, Cys353/Cys362, and Cys391/Cys398. Asn219 carries an N-linked (GlcNAc...) asparagine glycan. Ser275 is a catalytic residue. Residue Asp467 is part of the active site. Asn518 carries an N-linked (GlcNAc...) asparagine glycan. The active site involves His529.

It belongs to the peptidase S10 family.

Its subcellular location is the vacuole. It carries out the reaction Release of a C-terminal amino acid with broad specificity.. Functionally, vacuolar carboxypeptidase involved in degradation of small peptides. Digests preferentially peptides containing an aliphatic or hydrophobic residue in P1' position, as well as methionine, leucine or phenylalanine in P1 position of ester substrate. The chain is Carboxypeptidase Y homolog A (cpyA) from Emericella nidulans (strain FGSC A4 / ATCC 38163 / CBS 112.46 / NRRL 194 / M139) (Aspergillus nidulans).